A 24-amino-acid polypeptide reads, in one-letter code: uncharacterized protein (24 aa).

Residues 1-3 (MKK) are Cytoplasmic-facing. The helical transmembrane segment at 4 to 24 (TTIIMMGVAIIVVLGTELGWW) threads the bilayer.

The protein resides in the cell inner membrane. This is an uncharacterized protein from Escherichia coli (strain K12).